Consider the following 592-residue polypeptide: UPF0329 protein ECU01_0110/ECU01_1500/ECU08_0040 (592 aa).

Basic and acidic residues-rich tracts occupy residues 306–339 (RQRR…SKEK) and 353–362 (EAKEEEKKES). A disordered region spans residues 306–404 (RQRRREREIE…RKRYKIHRRV (99 aa)).

Belongs to the UPF0329 family.

In Encephalitozoon cuniculi (strain GB-M1) (Microsporidian parasite), this protein is UPF0329 protein ECU01_0110/ECU01_1500/ECU08_0040.